The following is a 23-amino-acid chain: Textile convulsant peptide (23 aa).

Disulfide bonds link Cys2/Cys10, Cys5/Cys15, and Cys9/Cys20. Proline amide; partial is present on Pro23.

The C-terminal amidation is described in Ref.1 and PubMed:23031820, but not in PubMed:22709442 and PubMed:36235146. Post-translationally, ju et al. (2022) describe a disulfide connectivity (C55-C61; C56-C69; C66-C68) that differs for the usual one. In terms of tissue distribution, expressed by the venom duct. Is present in all duct parts with a highest content in part 2 (proximal of the venom bulb) and then decreases in concentration toward the end of the duct.

It localises to the secreted. Causes convulsions mice. The polypeptide is Textile convulsant peptide (Conus textile (Cloth-of-gold cone)).